An 803-amino-acid chain; its full sequence is Volume-regulated anion channel subunit LRRC8C (803 aa).

Topologically, residues 1 to 22 (MIPVTEFRQFSEQQPAFRVLKP) are cytoplasmic. A helical transmembrane segment spans residues 23 to 48 (WWDVFTDYLSVAMLMIGVFGCTLQVM). The Extracellular segment spans residues 49 to 124 (QDKIICLPKR…CYERALHWYA (76 aa)). Intrachain disulfides connect C54/C308 and C115/C293. The helical transmembrane segment at 125 to 144 (KYFPYLVLIHTLVFMLCSNF) threads the bilayer. Topologically, residues 145–262 (WFKFPGSSSK…EEGDILYAMY (118 aa)) are cytoplasmic. Residues 177-206 (EVSGEDSEEKDNRKNNMNRSGTIQSGPEGN) form a disordered region. Polar residues predominate over residues 191 to 206 (NNMNRSGTIQSGPEGN). A phosphoserine mark is found at S212 and S215. Residues 263-284 (VRQTVLKVIKFLIIIAYNSALV) form a helical membrane-spanning segment. Over 285-314 (SKVQFTVDCNVDIQDMTGYKNFSCNHTMAH) the chain is Extracellular. Residues 315–339 (LFSKLSFCYLCFVSIYGLTCLYTLY) form a helical membrane-spanning segment. Topologically, residues 340-803 (WLFYRSLREY…SDVREQMKAD (464 aa)) are cytoplasmic. LRR repeat units follow at residues 409–420 (WTPDKLRQKLQT), 421–443 (NAHN…VFEI), 446–466 (LQSL…IAQL), 467–488 (DNLQ…ALSF), 490–513 (KENL…MYGL), 515–537 (NLEE…TLES), 541–563 (LKSL…VVDV), 566–586 (HLQK…NNLK), 588–611 (MTNL…VFSL), 613–635 (SLQE…SFQH), 637–659 (RKLT…IKKL), 660–682 (TSLE…LFLC), 684–705 (KIRY…IGVL), 706–728 (QSLQ…LYFC), 730–751 (KLKT…IGNL), 752–774 (LFLS…LGDC), and 776–799 (ALKR…VREQ).

The protein belongs to the LRRC8 family. Heterohexamer; oligomerizes with other LRRC8 proteins (LRRC8A, LRRC8B, LRRC8D and/or LRRC8E) to form a heterohexamer. Homoheptamer; inactive, likely because it is not targeted to the plasma membrane in the absence of LRRC8A. In vivo, the subunit composition may depend primarily on expression levels, and heterooligomeric channels containing various proportions of the different LRRC8 proteins may coexist. Expressed at very low levels in adipose tissue.

Its subcellular location is the cell membrane. The protein resides in the endoplasmic reticulum membrane. The enzyme catalyses chloride(in) = chloride(out). It catalyses the reaction iodide(out) = iodide(in). It carries out the reaction taurine(out) = taurine(in). The catalysed reaction is 2',3'-cGAMP(out) = 2',3'-cGAMP(in). Non-essential component of the volume-regulated anion channel (VRAC, also named VSOAC channel), an anion channel required to maintain a constant cell volume in response to extracellular or intracellular osmotic changes. The VRAC channel conducts iodide better than chloride and can also conduct organic osmolytes like taurine. Plays a redundant role in the efflux of amino acids, such as aspartate and glutamate, in response to osmotic stress. The VRAC channel also mediates transport of immunoreactive cyclic dinucleotide GMP-AMP (2'-3'-cGAMP), an immune messenger produced in response to DNA virus in the cytosol. Channel activity requires LRRC8A plus at least one other family member (LRRC8B, LRRC8C, LRRC8D or LRRC8E); channel characteristics depend on the precise subunit composition. May play a role in adipogenesis. The sequence is that of Volume-regulated anion channel subunit LRRC8C from Mus musculus (Mouse).